Reading from the N-terminus, the 856-residue chain is Rod cGMP-specific 3',5'-cyclic phosphodiesterase subunit beta (856 aa).

S2 bears the N-acetylserine mark. 2 GAF domains span residues 71-220 (NMER…TLNL) and 252-429 (DIER…GWSV). The PDEase domain occupies 481–814 (EEDELGILLK…KEWKALADEY (334 aa)). Catalysis depends on H557, which acts as the Proton donor. Residues H561, H597, D598, and D718 each coordinate a divalent metal cation. A compositionally biased stretch (basic and acidic residues) spans 823 to 833 (EEKQQQEDRTT). A disordered region spans residues 823 to 842 (EEKQQQEDRTTAKKAGTEIC). The S-geranylgeranyl cysteine moiety is linked to residue C853. A propeptide spans 854-856 (CIL) (removed in mature form).

Belongs to the cyclic nucleotide phosphodiesterase family. Oligomer composed of two catalytic chains (alpha and beta), an inhibitory chain (gamma) and the delta chain. A divalent metal cation serves as cofactor.

The protein localises to the membrane. Its subcellular location is the cell projection. The protein resides in the cilium. It is found in the photoreceptor outer segment. It catalyses the reaction 3',5'-cyclic GMP + H2O = GMP + H(+). Its function is as follows. Rod-specific cGMP phosphodiesterase that catalyzes the hydrolysis of 3',5'-cyclic GMP. Necessary for the formation of a functional phosphodiesterase holoenzyme. Involved in retinal circadian rhythm photoentrainment via modulation of UVA and orange light-induced phase-shift of the retina clock. May participate in processes of transmission and amplification of the visual signal. The sequence is that of Rod cGMP-specific 3',5'-cyclic phosphodiesterase subunit beta from Canis lupus familiaris (Dog).